Reading from the N-terminus, the 126-residue chain is Mating-type protein A1 (126 aa).

The segment at residues 70 to 126 is a DNA-binding region (homeobox); that stretch reads SPKGKSSISPQARAFLEQVFRRKQSLNSKEKEEVAKKCGITPLQVRVWFINKRMRSK.

The protein belongs to the MATA1 family. Binds DNA with a high specificity as a heterodimer of A1 and ALPHA2.

It localises to the nucleus. In terms of biological role, mating type proteins are sequence specific DNA-binding proteins that act as master switches in yeast differentiation by controlling gene expression in a cell type-specific fashion. Transcriptional corepressor that, in a/alpha diploid cells, binds cooperatively with the ALPHA2 protein to a 21-bp DNA sequence termed the haploid-specific gene (hsg) operator, to repress transcription of haploid-specific genes and of MATALPHA1. The protein is Mating-type protein A1 (MATA1) of Saccharomyces cerevisiae (Baker's yeast).